Reading from the N-terminus, the 760-residue chain is Armadillo-like helical domain-containing protein 4 (760 aa).

Positions 1–27 (MSRPIVLHICLAFCSLLLLNFAAQCLA) are cleaved as a signal peptide. The Extracellular segment spans residues 28–700 (FPNLERREIV…KDKAGYMSGM (673 aa)). 6 disordered regions span residues 49–69 (LNTD…SGDP), 117–143 (GEEV…LTNP), 216–243 (RTEK…TEPS), 373–392 (HGGE…PMGD), 474–495 (TRGE…DAPR), and 536–652 (NEEL…SQEP). A glycan (N-linked (GlcNAc...) asparagine) is linked at Asn56. The segment covering 216–228 (RTEKFEANPEHKT) has biased composition (basic and acidic residues). Polar residues predominate over residues 380–390 (DQSSVTPTSPM). Residues 474–484 (TRGEDETKGGR) are compositionally biased toward basic and acidic residues. Residues 594–635 (LESEEGEDDEDEEDEEEEDEEEEDEEEDEEDKDADSLDEALG) show a composition bias toward acidic residues. Residues 701–721 (LVPVGVGIAGALFILGALYSI) traverse the membrane as a helical segment. At 722-760 (KVMNRRRRNGFKRHKRKQREFNSMQDRVMLLADSSEDEF) the chain is on the cytoplasmic side. Phosphoserine is present on residues Ser755 and Ser756.

Interacts with IL6ST; this interaction prevents IL6ST protein homodimerization and bridges ARMH4 with IL6R and STAT3 and therefore inhibits phosphorylation of STAT3 at 'Tyr-705'. Interacts (via cytoplasmic tail) with RICTOR; this interaction bridges ARMH4 to the mTORC2 complex and inhibits the mTORC2 kinase activity.

The protein localises to the membrane. Functionally, may modulate immune response and may play a role in inflammation. Down-modulates STAT3 signaling throught direct interaction with IL6ST, resulting in the inhibition of phosphorylation of STAT3 at Tyr-705. May negatively regulates AKT signaling by modulating the activity of mTORC2 complex through RICTOR interaction. The chain is Armadillo-like helical domain-containing protein 4 from Bos taurus (Bovine).